The chain runs to 128 residues: Phycoerythrin alpha-3 chain, chloroplastic (128 aa).

The transit peptide at 1–52 directs the protein to the chloroplast; sequence MFAKTLASLAVIGSAAAYVPMMSMDMGRREVVQAGAAAAAVTPFLSGAPAGA. The residue at position 56 (Lys56) is a 5-hydroxylysine. Residues 70–89 are disordered; the sequence is GCSRAPKESTGGKAGGQDDE. Residues Cys71, Arg73, 77–78, and Lys93 contribute to the 15,16-dihydrobiliverdin site; that span reads ES.

It belongs to the phycoerythrin family. In terms of assembly, heterotetramer of 2 different alpha chains and 2 identical beta chains. The subunit composition could comprise of any combination of 2 out of 4 different alpha units with an invariant beta unit. In terms of processing, contains one covalently linked 15,16-dihydrobiliverdin chromophore.

It localises to the plastid. The protein localises to the chloroplast thylakoid membrane. In terms of biological role, light-harvesting photosynthetic tetrapyrrole chromophore-protein from the phycobiliprotein complex. This is Phycoerythrin alpha-3 chain, chloroplastic (cpeA3) from Rhodomonas sp. (strain CS 24) (Chroomonas sp. (strain CS24)).